A 162-amino-acid chain; its full sequence is uncharacterized protein (162 aa).

A PUA domain is found at 78–154; sequence KNLVVVDIGA…KAIKNLHYVG (77 aa).

This is an uncharacterized protein from Methanocaldococcus jannaschii (strain ATCC 43067 / DSM 2661 / JAL-1 / JCM 10045 / NBRC 100440) (Methanococcus jannaschii).